Reading from the N-terminus, the 319-residue chain is Lipoyl synthase (319 aa).

The disordered stretch occupies residues 6–29 (DTVSANPVRPRHPEKAARPDALSP). A compositionally biased stretch (basic and acidic residues) spans 16–29 (RHPEKAARPDALSP). Residues Cys61, Cys66, Cys72, Cys87, Cys91, Cys94, and Ser300 each contribute to the [4Fe-4S] cluster site. The Radical SAM core domain maps to 73-289 (WDKKHATFMI…QTTAYAKGFL (217 aa)).

Belongs to the radical SAM superfamily. Lipoyl synthase family. It depends on [4Fe-4S] cluster as a cofactor.

The protein resides in the cytoplasm. The catalysed reaction is [[Fe-S] cluster scaffold protein carrying a second [4Fe-4S](2+) cluster] + N(6)-octanoyl-L-lysyl-[protein] + 2 oxidized [2Fe-2S]-[ferredoxin] + 2 S-adenosyl-L-methionine + 4 H(+) = [[Fe-S] cluster scaffold protein] + N(6)-[(R)-dihydrolipoyl]-L-lysyl-[protein] + 4 Fe(3+) + 2 hydrogen sulfide + 2 5'-deoxyadenosine + 2 L-methionine + 2 reduced [2Fe-2S]-[ferredoxin]. It participates in protein modification; protein lipoylation via endogenous pathway; protein N(6)-(lipoyl)lysine from octanoyl-[acyl-carrier-protein]: step 2/2. In terms of biological role, catalyzes the radical-mediated insertion of two sulfur atoms into the C-6 and C-8 positions of the octanoyl moiety bound to the lipoyl domains of lipoate-dependent enzymes, thereby converting the octanoylated domains into lipoylated derivatives. This chain is Lipoyl synthase, found in Rhodopseudomonas palustris (strain ATCC BAA-98 / CGA009).